Consider the following 101-residue polypeptide: Signal recognition particle 19 kDa protein (101 aa).

Belongs to the SRP19 family. In terms of assembly, part of the signal recognition particle protein translocation system, which is composed of SRP and FtsY. Archaeal SRP consists of a 7S RNA molecule of 300 nucleotides and two protein subunits: SRP54 and SRP19.

It is found in the cytoplasm. Involved in targeting and insertion of nascent membrane proteins into the cytoplasmic membrane. Binds directly to 7S RNA and mediates binding of the 54 kDa subunit of the SRP. This is Signal recognition particle 19 kDa protein from Thermofilum pendens (strain DSM 2475 / Hrk 5).